The primary structure comprises 200 residues: Recombination protein RecR (200 aa).

A C4-type zinc finger spans residues 59–74; it reads CSVCGSLDTSDPCAIC. A Toprim domain is found at 82 to 177; that stretch reads RLLCVVEEVG…SVTMLARGVP (96 aa).

This sequence belongs to the RecR family.

In terms of biological role, may play a role in DNA repair. It seems to be involved in an RecBC-independent recombinational process of DNA repair. It may act with RecF and RecO. This chain is Recombination protein RecR, found in Caulobacter sp. (strain K31).